A 395-amino-acid polypeptide reads, in one-letter code: Elongation factor Tu (395 aa).

The 195-residue stretch at 10–204 (KPHVNVGTIG…AVDNWVPLPE (195 aa)) folds into the tr-type G domain. A G1 region spans residues 19 to 26 (GHVDHGKT). 19-26 (GHVDHGKT) is a binding site for GTP. Thr-26 contributes to the Mg(2+) binding site. Residues 60-64 (GITIN) form a G2 region. The segment at 81–84 (DCPG) is G3. GTP-binding positions include 81-85 (DCPGH) and 136-139 (NKCD). The G4 stretch occupies residues 136–139 (NKCD). The segment at 174–176 (SAL) is G5.

Belongs to the TRAFAC class translation factor GTPase superfamily. Classic translation factor GTPase family. EF-Tu/EF-1A subfamily. Monomer.

The protein localises to the cytoplasm. The enzyme catalyses GTP + H2O = GDP + phosphate + H(+). Its function is as follows. GTP hydrolase that promotes the GTP-dependent binding of aminoacyl-tRNA to the A-site of ribosomes during protein biosynthesis. This is Elongation factor Tu from Porphyromonas gingivalis (strain ATCC 33277 / DSM 20709 / CIP 103683 / JCM 12257 / NCTC 11834 / 2561).